Reading from the N-terminus, the 87-residue chain is Down syndrome critical region protein 10 (87 aa).

In terms of tissue distribution, expressed in placenta and testis.

In Homo sapiens (Human), this protein is Down syndrome critical region protein 10 (DSCR10).